Consider the following 171-residue polypeptide: UPF0725 protein At3g25080 (171 aa).

Belongs to the UPF0725 (EMB2204) family.

The chain is UPF0725 protein At3g25080 from Arabidopsis thaliana (Mouse-ear cress).